A 757-amino-acid chain; its full sequence is MLQIQVEEKEEDTEESSSEEEEDKLPRRESLRPKRKRTRDVINEDDPEPEPEDEETRKAREKERRRRLRRGAEEEEEIDEEELERLKALLDENRQMIATVKCKPWKMEKKIEVLKEAKKFVSENEGALGKGKGKKWFAFKMMMAKKWAKFLRDFENFKAACVPWENKIKAIESQFGSSVASYFLFLRWMYGVNMVLFVLTFSLIMLPEYLWGLPYGSLPRKTVPRAEEASAANFGVLYDFNGLAQYSVLFYGYYDNKRTIGWLNFRLPLSYFLVGIMCIGYSFLVVLKAMTKNIGDDGGGDDNTFNFSWKVFCSWDYLIGNPETADNKFNSITMNFKEAIIEERAAQVEENIHLIRFLRFLANFFVFLTLGASGYLIFWAVKRSQEFAQQDPDTLGWWEKNEMNMVMSLLGMFCPTLFDLFAELEDYHPLIALKWLLGRIFALLLGNLYVFILALMDEINNKIEEEKLVKANITLWEANMIKAYNESLSGLSGNTTGAPFFVHPADVPRGPCWETMVGQEFVRLTVSDVLTTYVTILIGDFLRACFVRFCNYCWCWDLEYGYPSYTEFDISGNVLALIFNQGMIWMGSFFAPSLPGINILRLHTSMYFQCWAVMCCNVPEARVFKASRSNNFYLGMLLLILFLSTMPVLYMIVSLPPSFDCGPFSGKNRMFEVIGETLEHDFPSWMAKILRQLSNPGLVIAVILVMVLTIYYLNATAKGQKAANLDLKKKMKQQALENKMRNKKMAAARAAAAAGGQ.

The disordered stretch occupies residues 1–74 (MLQIQVEEKE…RRRLRRGAEE (74 aa)). The Cytoplasmic segment spans residues 1–176 (MLQIQVEEKE…KIKAIESQFG (176 aa)). Residues 8 to 23 (EKEEDTEESSSEEEED) show a composition bias toward acidic residues. Ser-30 is subject to Phosphoserine. Thr-38 carries the post-translational modification Phosphothreonine. Residues 43–54 (NEDDPEPEPEDE) are compositionally biased toward acidic residues. The tract at residues 81-130 (EELERLKALLDENRQMIATVKCKPWKMEKKIEVLKEAKKFVSENEGALGK) is required for interaction with CIB2. Ser-122 bears the Phosphoserine mark. A helical transmembrane segment spans residues 177 to 214 (SSVASYFLFLRWMYGVNMVLFVLTFSLIMLPEYLWGLP). Over 215–265 (YGSLPRKTVPRAEEASAANFGVLYDFNGLAQYSVLFYGYYDNKRTIGWLNF) the chain is Extracellular. The chain crosses the membrane as a helical span at residues 266-297 (RLPLSYFLVGIMCIGYSFLVVLKAMTKNIGDD). A required for interaction with CIB2 region spans residues 298–352 (GGGDDNTFNFSWKVFCSWDYLIGNPETADNKFNSITMNFKEAIIEERAAQVEENI). The Cytoplasmic segment spans residues 298–353 (GGGDDNTFNFSWKVFCSWDYLIGNPETADNKFNSITMNFKEAIIEERAAQVEENIH). Ser-308 is modified (phosphoserine). The helical transmembrane segment at 354 to 384 (LIRFLRFLANFFVFLTLGASGYLIFWAVKRS) threads the bilayer. The Extracellular portion of the chain corresponds to 385–396 (QEFAQQDPDTLG). Phosphothreonine is present on Thr-394. Residues 397 to 424 (WWEKNEMNMVMSLLGMFCPTLFDLFAEL) traverse the membrane as a helical segment. Topologically, residues 425–428 (EDYH) are cytoplasmic. Residues 429 to 463 (PLIALKWLLGRIFALLLGNLYVFILALMDEINNKI) traverse the membrane as a helical segment. The Extracellular portion of the chain corresponds to 464–512 (EEEKLVKANITLWEANMIKAYNESLSGLSGNTTGAPFFVHPADVPRGPC). The helical transmembrane segment at 513-550 (WETMVGQEFVRLTVSDVLTTYVTILIGDFLRACFVRFC) threads the bilayer. Residues 551–569 (NYCWCWDLEYGYPSYTEFD) are Cytoplasmic-facing. The chain crosses the membrane as a helical span at residues 570-590 (ISGNVLALIFNQGMIWMGSFF). Over 591–593 (APS) the chain is Extracellular. A helical transmembrane segment spans residues 594–616 (LPGINILRLHTSMYFQCWAVMCC). At 617–630 (NVPEARVFKASRSN) the chain is on the cytoplasmic side. A helical membrane pass occupies residues 631–654 (NFYLGMLLLILFLSTMPVLYMIVS). The Extracellular portion of the chain corresponds to 655-697 (LPPSFDCGPFSGKNRMFEVIGETLEHDFPSWMAKILRQLSNPG). A helical transmembrane segment spans residues 698–731 (LVIAVILVMVLTIYYLNATAKGQKAANLDLKKKM). Over 732–757 (KQQALENKMRNKKMAAARAAAAAGGQ) the chain is Cytoplasmic.

This sequence belongs to the TMC family. As to quaternary structure, forms the MET channel composed of TMC dimer (TMC1 or TMC2), TMIE, TOMT, CIB (CIB2 or CIB3), LHFPL5 and PCDH15. Interacts with PIEZO1 and PIEZO2; the interaction may be part of the MET complex. The interaction of TMC1 and TMC2 with TOMT is required for the transportation of TMC1/2 into the stereocilia of hair cells. Interacts (via N-terminus) with both isoforms CD1 and CD3 of PCDH15. Can form a heterodimer with TMC2, TMC5 or TMC7. As to expression, detected in cochlear inner and outer hair cells and in neurosensory epithelia of the vestibular end organs. Also expressed in cortex, cerebellum, eye, colon, ovary and testis.

Its subcellular location is the cell membrane. The catalysed reaction is Ca(2+)(in) = Ca(2+)(out). Its function is as follows. Pore-forming subunit of the mechanotransducer (MET) non-selective cation channel complex located at the tips of stereocilia of cochlear hair cells and that mediates sensory transduction in the auditory system. The MET complex is composed of two dimeric pore-forming ion-conducting transmembrane TMC (TMC1 or TMC2) subunits, several auxiliary proteins including LHFPL5, TMIE, CIB2/3 and TOMT, the tip-link PCDH15, and possibly the PIEZO subunits. MET channel is activated by tension in the tip-link extending from the side wall of one stereocilium to the tip of the adjacent shorter stereocilium, where the channel is located. TMC1 MET channel is highly permeable to calcium and likely transports monovalent cations. Also involved in vestibular hair cells transduction current. This Mus musculus (Mouse) protein is Transmembrane channel-like protein 1.